The sequence spans 114 residues: Tyrosine-protein phosphatase 13 (114 aa).

The Tyrosine-protein phosphatase domain maps to 1–114 (WRMLWEHNST…QFGQEGPITI (114 aa)). Position 82 (Glu-82) interacts with substrate.

Belongs to the protein-tyrosine phosphatase family.

It carries out the reaction O-phospho-L-tyrosyl-[protein] + H2O = L-tyrosyl-[protein] + phosphate. In Styela plicata (Wrinkled sea squirt), this protein is Tyrosine-protein phosphatase 13 (STY-13).